The chain runs to 240 residues: PF03932 family protein CutC (240 aa).

The protein belongs to the CutC family.

It is found in the cytoplasm. The chain is PF03932 family protein CutC from Xanthomonas axonopodis pv. citri (strain 306).